The sequence spans 124 residues: Prefoldin subunit beta (124 aa).

The protein belongs to the prefoldin subunit beta family. As to quaternary structure, heterohexamer of two alpha and four beta subunits.

It is found in the cytoplasm. Molecular chaperone capable of stabilizing a range of proteins. Seems to fulfill an ATP-independent, HSP70-like function in archaeal de novo protein folding. This Pyrobaculum arsenaticum (strain DSM 13514 / JCM 11321 / PZ6) protein is Prefoldin subunit beta.